The sequence spans 113 residues: Putative anti-sigma factor antagonist TM_1081 (113 aa).

The 110-residue stretch at 1-110 (MFPYKIVDDV…DTISEAMEEV (110 aa)) folds into the STAS domain. Phosphoserine is present on S55.

It belongs to the anti-sigma-factor antagonist family. Phosphorylated on a serine residue.

In terms of biological role, in the phosphorylated form it could act as an anti-anti-sigma factor that counteracts an anti-sigma factor and thus releases a sigma factor from inhibition. The protein is Putative anti-sigma factor antagonist TM_1081 of Thermotoga maritima (strain ATCC 43589 / DSM 3109 / JCM 10099 / NBRC 100826 / MSB8).